Here is a 387-residue protein sequence, read N- to C-terminus: MYRNQLARASLRSTSSINQIRNMITAQAVVYAQHGEPKDVLKTLKYEIDDDNLDSNSIIVKTLGSPVNPSDINQIQGVYPSKPEKTTELGSNEPVAVCGNEGLFEILKVGDNVSNFKVGDWCVPTSVNMGTWRTHMLCGGDEMTKIPNPEQSKANGKPSGLSVNQGATISVNPLTAYLMLTHYVKLTPGKDWFIQNGGNSAVGKYATQISNLLGINSISVIRDRPDLQDLIKNMTEECGATKVITEEQNASKEFGSEIKSWVKETGGEIKLALNCVGGKNSTGIARKLNNNGLMLTYGGMSMQPVILPTSLHIFKNITSSGFWVTQLLKNDVELKRKTLGQIIEWYENRQLKDAPSKETKFNPSDELSRYYIDGIVNSKGGKQLIVY.

A mitochondrion-targeting transit peptide spans 1 to 23; sequence MYRNQLARASLRSTSSINQIRNM. Y79 serves as the catalytic Proton donor. NADP(+) is bound by residues N172, 199–202, 222–224, 297–300, 322–324, and K382; these read NSAV, RDR, YGGM, and FWV.

This sequence belongs to the zinc-containing alcohol dehydrogenase family. Quinone oxidoreductase subfamily. In terms of assembly, homodimer.

It localises to the mitochondrion matrix. It catalyses the reaction a 2,3-saturated acyl-[ACP] + NADP(+) = a (2E)-enoyl-[ACP] + NADPH + H(+). Its function is as follows. Catalyzes the NADPH-dependent reduction of trans-2-enoyl thioesters in mitochondrial fatty acid synthesis (fatty acid synthesis type II). Fatty acid chain elongation in mitochondria uses acyl carrier protein (ACP) as an acyl group carrier, but the enzyme accepts both ACP and CoA thioesters as substrates in vitro. Required for respiration and the maintenance of the mitochondrial compartment. This chain is Enoyl-[acyl-carrier-protein] reductase 2, mitochondrial (ETR2), found in Debaryomyces hansenii (strain ATCC 36239 / CBS 767 / BCRC 21394 / JCM 1990 / NBRC 0083 / IGC 2968) (Yeast).